A 160-amino-acid chain; its full sequence is Lymphocyte antigen 86 (160 aa).

The signal sequence occupies residues 1-20; it reads MKTLNVLALVLVLLCINAST. Disulfide bonds link C28/C53, C40/C149, and C97/C107.

In terms of assembly, M-shaped tetramer of two CD180-LY86 heterodimers. In terms of tissue distribution, detected in the macrophage-like 10.4 cells.

It is found in the secreted. The protein resides in the extracellular space. Functionally, may cooperate with CD180 and TLR4 to mediate the innate immune response to bacterial lipopolysaccharide (LPS) and cytokine production. Important for efficient CD180 cell surface expression. The polypeptide is Lymphocyte antigen 86 (LY86) (Gallus gallus (Chicken)).